The following is a 208-amino-acid chain: Large ribosomal subunit protein uL4 (208 aa).

Residues 44-79 (QRQGTHKSKERSEISGSTRKLGRQKGGGGARRGDIN) form a disordered region.

This sequence belongs to the universal ribosomal protein uL4 family. As to quaternary structure, part of the 50S ribosomal subunit.

One of the primary rRNA binding proteins, this protein initially binds near the 5'-end of the 23S rRNA. It is important during the early stages of 50S assembly. It makes multiple contacts with different domains of the 23S rRNA in the assembled 50S subunit and ribosome. In terms of biological role, forms part of the polypeptide exit tunnel. The polypeptide is Large ribosomal subunit protein uL4 (Phocaeicola vulgatus (strain ATCC 8482 / DSM 1447 / JCM 5826 / CCUG 4940 / NBRC 14291 / NCTC 11154) (Bacteroides vulgatus)).